We begin with the raw amino-acid sequence, 517 residues long: ATP synthase subunit alpha 2 (517 aa).

173-180 is an ATP binding site; the sequence is GDRQTGKT.

Belongs to the ATPase alpha/beta chains family. As to quaternary structure, F-type ATPases have 2 components, CF(1) - the catalytic core - and CF(0) - the membrane proton channel. CF(1) has five subunits: alpha(3), beta(3), gamma(1), delta(1), epsilon(1). CF(0) has three main subunits: a(1), b(2) and c(9-12). The alpha and beta chains form an alternating ring which encloses part of the gamma chain. CF(1) is attached to CF(0) by a central stalk formed by the gamma and epsilon chains, while a peripheral stalk is formed by the delta and b chains.

It localises to the cell inner membrane. The enzyme catalyses ATP + H2O + 4 H(+)(in) = ADP + phosphate + 5 H(+)(out). Its function is as follows. Produces ATP from ADP in the presence of a proton gradient across the membrane. The alpha chain is a regulatory subunit. The sequence is that of ATP synthase subunit alpha 2 from Legionella pneumophila subsp. pneumophila (strain Philadelphia 1 / ATCC 33152 / DSM 7513).